Reading from the N-terminus, the 155-residue chain is Transmembrane protein C1orf162 (155 aa).

The tract at residues 1 to 28 is disordered; the sequence is MGGNGSTCKPDTERQGTLSTAAPTTSPA. The span at 19–28 shows a compositional bias: low complexity; the sequence is STAAPTTSPA. Residues 41–61 traverse the membrane as a helical segment; it reads ILAFCAGVLLTLLLIAFIFLI. Positions 92–114 are disordered; it reads ADHSKPQAPDPHSDPPAKLSSIP. S140 is modified (phosphoserine).

It is found in the membrane. The chain is Transmembrane protein C1orf162 (C1orf162) from Homo sapiens (Human).